The chain runs to 431 residues: Adenylosuccinate synthetase (431 aa).

GTP-binding positions include Gly-12–Lys-18 and Gly-40–Thr-42. The Proton acceptor role is filled by Asp-13. 2 residues coordinate Mg(2+): Asp-13 and Gly-40. Residues Asp-13 to Lys-16, Asn-38 to His-41, Thr-129, Arg-143, Gln-224, Thr-239, and Arg-303 each bind IMP. The active-site Proton donor is His-41. A substrate-binding site is contributed by Val-299–Arg-305. GTP contacts are provided by residues Arg-305, Lys-331–Asp-333, and Gly-413–Gly-415.

Belongs to the adenylosuccinate synthetase family. As to quaternary structure, homodimer. The cofactor is Mg(2+).

It is found in the cytoplasm. The enzyme catalyses IMP + L-aspartate + GTP = N(6)-(1,2-dicarboxyethyl)-AMP + GDP + phosphate + 2 H(+). It functions in the pathway purine metabolism; AMP biosynthesis via de novo pathway; AMP from IMP: step 1/2. Plays an important role in the de novo pathway of purine nucleotide biosynthesis. Catalyzes the first committed step in the biosynthesis of AMP from IMP. The sequence is that of Adenylosuccinate synthetase from Mycobacteroides abscessus (strain ATCC 19977 / DSM 44196 / CCUG 20993 / CIP 104536 / JCM 13569 / NCTC 13031 / TMC 1543 / L948) (Mycobacterium abscessus).